A 590-amino-acid polypeptide reads, in one-letter code: Kinetochore protein ndc-80 (590 aa).

Coiled-coil stretches lie at residues 269 to 342 and 450 to 525; these read KGNE…KQIH and ELET…MKLD.

Belongs to the NDC80/HEC1 family. As to quaternary structure, component of the NDC80 complex, which is composed of at least ndc-80 and him-10. The NDC80 complex interacts with knl-1. Interacts with the RZZ complex components rod-1 (via N-terminus) and zwl-1.

The protein localises to the nucleus. The protein resides in the chromosome. It localises to the centromere. It is found in the kinetochore. Its subcellular location is the cytoplasm. The protein localises to the cytoskeleton. In terms of biological role, acts as a component of the essential kinetochore-associated ndc-80 complex, which is required for chromosome segregation in mitosis and meiosis and spindle checkpoint activity. Plays a role in kinetochore assembly and recruits the checkpoint protein mdf-2 and the spindly-like protein spdl-1 to unattached kinetochores. Mediates the formation of end-on kinetochore-microtubule attachments through recruitment of spdl-1. The ndc-80 complex synergistically enhances the affinity of the ska-1 complex for microtubules and may allow the ndc-80 complex to track depolymerizing microtubules. This chain is Kinetochore protein ndc-80 (ndc-80), found in Caenorhabditis elegans.